Consider the following 510-residue polypeptide: ATP synthase subunit alpha, mitochondrial (510 aa).

An ATP-binding site is contributed by 171-178 (GDRQTGKT).

In terms of assembly, F-type ATP synthases have 2 components, the catalytic core F(1) and the membrane-embedded component F(0), linked together by a central stalk and a peripheral stalk. The central stalk, also called rotor shaft, is often seen as part of F(1). The peripheral stalk is seen as part of F(0). F(0) contains the membrane channel next to the rotor. F-type ATP synthases form dimers but each monomer functions independently in ATP generation. The dimer consists of 18 different polypeptides: ATP1 (subunit alpha, part of F(1), 3 molecules per monomer), ATP2 (subunit beta, part of F(1), 3 molecules per monomer), ATP3 (subunit gamma, part of the central stalk), ATP4 (subunit b, part of the peripheral stalk), ATP5/OSCP (subunit 5/OSCP, part of the peripheral stalk), ATP6 (subunit a, part of the peripheral stalk), ATP7 (subunit d, part of the peripheral stalk), ATP8 (subunit 8, part of the peripheral stalk), OLI1 (subunit c, part of the rotor, 10 molecules per monomer), ATP14 (subunit h, part of the peripheral stalk), ATP15 (subunit epsilon, part of the central stalk), ATP16 (subunit delta, part of the central stalk), ATP17 (subunit f, part of the peripheral stalk), ATP18 (subunit i/j, part of the peripheral stalk). Dimer-specific subunits are ATP19 (subunit k, at interface between monomers), ATP20 (subunit g, at interface between monomers), TIM11 (subunit e, at interface between monomers). Also contains subunit L.

Its subcellular location is the mitochondrion inner membrane. In terms of biological role, mitochondrial membrane ATP synthase (F(1)F(0) ATP synthase or Complex V) produces ATP from ADP in the presence of a proton gradient across the membrane which is generated by electron transport complexes of the respiratory chain. F-type ATP synthases consist of two structural domains, F(1) - containing the extramembraneous catalytic core, and F(0) - containing the membrane proton channel, linked together by a central stalk and a peripheral stalk. During catalysis, ATP synthesis in the catalytic domain of F(1) is coupled via a rotary mechanism of the central stalk subunits to proton translocation. Subunits alpha/ATP1 and beta/ATP2 form the catalytic core in F(1). Rotation of the central stalk against the surrounding alpha/ATP1(3)beta/ATP2(3) subunits leads to hydrolysis of ATP in three separate catalytic sites on the beta/ATP2 subunits. Subunit alpha/ATP1 does not bear the catalytic high-affinity ATP-binding sites. The protein is ATP synthase subunit alpha, mitochondrial of Pichia angusta (Yeast).